A 357-amino-acid polypeptide reads, in one-letter code: MSLTRLLIRDFRNIETADLALSPGFNFLVGANGSGKTSVLEAIYTLGHGRAFRSLQIGRVIRHEQEAFVLHGRLQGEERETAIGLTKDKQGDSKVRIDGTDGHKVAELAHLMPMQLITPEGFTLLNGGPKYRRAFLDWACFHNEPGFFTAWSNLKRLLKQRNAALRQVTRYEQLRPWDKELIPLVEQISTWRAEYSAGIAADMADTCKQFLPEFSLTFSFQRGWEKETEYAEVLERNFERDRQLTYTAHGPHKADLRIRADGAPVEDTLSRGQLKLLMCALRLAQGEFLTRESGRRCLYLIDDFASELDDERRGLLASRLKATQSQVFVSAISAEHVIDMSDENSKMFTVEKGKITD.

30–37 (GANGSGKT) provides a ligand contact to ATP.

The protein belongs to the RecF family.

It localises to the cytoplasm. Its function is as follows. The RecF protein is involved in DNA metabolism; it is required for DNA replication and normal SOS inducibility. RecF binds preferentially to single-stranded, linear DNA. It also seems to bind ATP. The sequence is that of DNA replication and repair protein RecF from Shigella boydii serotype 4 (strain Sb227).